A 1533-amino-acid polypeptide reads, in one-letter code: Glycogen debranching enzyme (1533 aa).

Residue Ser64 is modified to Phosphoserine. Active-site residues include Asp527, His530, and Asp628.

Belongs to the glycogen debranching enzyme family. In terms of assembly, monomer. Interacts with NHLRC1/malin. Ubiquitinated.

Its subcellular location is the cytoplasm. The catalysed reaction is Transfers a segment of a (1-&gt;4)-alpha-D-glucan to a new position in an acceptor, which may be glucose or a (1-&gt;4)-alpha-D-glucan.. The enzyme catalyses Hydrolysis of (1-&gt;6)-alpha-D-glucosidic branch linkages in glycogen phosphorylase limit dextrin.. In terms of biological role, multifunctional enzyme acting as 1,4-alpha-D-glucan:1,4-alpha-D-glucan 4-alpha-D-glycosyltransferase and amylo-1,6-glucosidase in glycogen degradation. The protein is Glycogen debranching enzyme (AGL) of Canis lupus familiaris (Dog).